The following is a 378-amino-acid chain: Cytochrome P450 2C15 (378 aa).

C323 provides a ligand contact to heme.

Belongs to the cytochrome P450 family. The cofactor is heme.

It is found in the endoplasmic reticulum membrane. Its subcellular location is the microsome membrane. It catalyses the reaction an organic molecule + reduced [NADPH--hemoprotein reductase] + O2 = an alcohol + oxidized [NADPH--hemoprotein reductase] + H2O + H(+). Cytochromes P450 are a group of heme-thiolate monooxygenases. In liver microsomes, this enzyme is involved in an NADPH-dependent electron transport pathway. It oxidizes a variety of structurally unrelated compounds, including steroids, fatty acids, and xenobiotics. This chain is Cytochrome P450 2C15 (CYP2C15), found in Oryctolagus cuniculus (Rabbit).